The following is an 858-amino-acid chain: Putative glutamate--cysteine ligase 2-3 (858 aa).

A carboxylate-amine ligase region spans residues 1 to 372 (MSDARNVAVG…RDVPPAGASL (372 aa)). Residues 373 to 858 (GVAPAVSAPD…GSKDTWIPRR (486 aa)) form a unknown region.

It in the N-terminal section; belongs to the glutamate--cysteine ligase type 2 family. YbdK subfamily.

The enzyme catalyses L-cysteine + L-glutamate + ATP = gamma-L-glutamyl-L-cysteine + ADP + phosphate + H(+). In terms of biological role, ATP-dependent carboxylate-amine ligase which exhibits weak glutamate--cysteine ligase activity. This Frankia alni (strain DSM 45986 / CECT 9034 / ACN14a) protein is Putative glutamate--cysteine ligase 2-3.